The chain runs to 515 residues: Integrator complex subunit 14 (515 aa).

The VWFA domain maps to 2-204; the sequence is PTVVVMDVSL…KNVQSMFGKL (203 aa). Residues Ser10, Ser12, and Thr86 each coordinate Mg(2+). Lys418 carries the N6-acetyllysine modification.

This sequence belongs to the Integrator subunit 14 family. Component of the Integrator complex, composed of core subunits INTS1, INTS2, INTS3, INTS4, INTS5, INTS6, INTS7, INTS8, INTS9/RC74, INTS10, INTS11/CPSF3L, INTS12, INTS13, INTS14 and INTS15. The core complex associates with protein phosphatase 2A subunits PPP2CA and PPP2R1A, to form the Integrator-PP2A (INTAC) complex. INTS14 is part of the tail subcomplex, composed of INTS10, INTS13, INTS14 and INTS15.

It localises to the nucleus. Functionally, component of the integrator complex, a multiprotein complex that terminates RNA polymerase II (Pol II) transcription in the promoter-proximal region of genes. The integrator complex provides a quality checkpoint during transcription elongation by driving premature transcription termination of transcripts that are unfavorably configured for transcriptional elongation: the complex terminates transcription by (1) catalyzing dephosphorylation of the C-terminal domain (CTD) of Pol II subunit POLR2A/RPB1 and SUPT5H/SPT5, (2) degrading the exiting nascent RNA transcript via endonuclease activity and (3) promoting the release of Pol II from bound DNA. The integrator complex is also involved in terminating the synthesis of non-coding Pol II transcripts, such as enhancer RNAs (eRNAs), small nuclear RNAs (snRNAs), telomerase RNAs and long non-coding RNAs (lncRNAs). Within the integrator complex, INTS14 is part of the integrator tail module that acts as a platform for the recruitment of transcription factors at promoters. The chain is Integrator complex subunit 14 from Mus musculus (Mouse).